A 301-amino-acid polypeptide reads, in one-letter code: Immediate early response gene 5-like protein (301 aa).

Belongs to the IER family.

In Danio rerio (Zebrafish), this protein is Immediate early response gene 5-like protein (ier5l).